The following is a 221-amino-acid chain: Large ribosomal subunit protein uL3 (221 aa).

This sequence belongs to the universal ribosomal protein uL3 family. Part of the 50S ribosomal subunit. Forms a cluster with proteins L14 and L19.

One of the primary rRNA binding proteins, it binds directly near the 3'-end of the 23S rRNA, where it nucleates assembly of the 50S subunit. This is Large ribosomal subunit protein uL3 from Chlamydia felis (strain Fe/C-56) (Chlamydophila felis).